Here is a 250-residue protein sequence, read N- to C-terminus: Diaminopimelate epimerase (250 aa).

2 residues coordinate substrate: asparagine 11 and asparagine 60. Residue cysteine 69 is the Proton donor of the active site. Residues 70–71, asparagine 164, and 182–183 contribute to the substrate site; these read GN and ER. The Proton acceptor role is filled by cysteine 192. Position 193 to 194 (193 to 194) interacts with substrate; the sequence is GT.

This sequence belongs to the diaminopimelate epimerase family. Homodimer.

The protein resides in the cytoplasm. The catalysed reaction is (2S,6S)-2,6-diaminopimelate = meso-2,6-diaminopimelate. It participates in amino-acid biosynthesis; L-lysine biosynthesis via DAP pathway; DL-2,6-diaminopimelate from LL-2,6-diaminopimelate: step 1/1. Functionally, catalyzes the stereoinversion of LL-2,6-diaminopimelate (L,L-DAP) to meso-diaminopimelate (meso-DAP), a precursor of L-lysine and an essential component of the bacterial peptidoglycan. This is Diaminopimelate epimerase from Nitratiruptor sp. (strain SB155-2).